The sequence spans 114 residues: rRNA-processing protein cgrA (114 aa).

Residues 1-96 (MSASESAPSA…YDKMAEKMHR (96 aa)) form a disordered region. Residues 40-101 (AKRLEARKHQ…EKMHRKRVER (62 aa)) adopt a coiled-coil conformation. A compositionally biased stretch (basic and acidic residues) spans 41–93 (KRLEARKHQEAVKEHERELKEEKEAERQAHIQRIKDRRAAKEEKERYDKMAEK).

The protein belongs to the CGR1 family.

It localises to the nucleus. Its subcellular location is the nucleolus. Functionally, involved in nucleolar integrity and required for processing of the pre-rRNA for the 60S ribosome subunit. In Aspergillus terreus (strain NIH 2624 / FGSC A1156), this protein is rRNA-processing protein cgrA (cgrA).